The chain runs to 397 residues: 3-hydroxybenzoate 6-hydroxylase (397 aa).

It belongs to the 3-hydroxybenzoate 6-hydroxylase family. As to quaternary structure, monomer. The cofactor is FAD.

The catalysed reaction is 3-hydroxybenzoate + NADH + O2 + H(+) = 2,5-dihydroxybenzoate + NAD(+) + H2O. Inhibited by copper, mercury and iron ions. Catalyzes the NAD- or NADP-dependent conversion of 3-hydroxybenzoate to gentisate. NAD and NADP function equally well. This Klebsiella oxytoca protein is 3-hydroxybenzoate 6-hydroxylase (mhbM).